Consider the following 1740-residue polypeptide: SH3 and multiple ankyrin repeat domains protein 3 (1740 aa).

Residues 1–75 (MDGPGASAVV…KFLDEERLLQ (75 aa)) form an intramolecular interaction with the ANK repeats region. Tyr122 bears the Phosphotyrosine mark. 6 ANK repeats span residues 148-181 (SGEC…FRTR), 182-214 (DGLT…YKDS), 215-245 (RGLT…QLGT), 249-278 (NGWQ…NMGA), 282-311 (SGNT…NKDV), and 315-345 (NSQT…DVVP). Residues 354 to 466 (KRRRLAGPSG…PPPRGPKRKL (113 aa)) form a disordered region. Ser373, Ser375, Ser387, and Ser394 each carry phosphoserine. Residues 404 to 415 (LQEEKDRDRDGE) show a composition bias toward basic and acidic residues. Over residues 444–460 (APGPGPASPAPPAPPPR) the composition is skewed to pro residues. In terms of domain architecture, SH3 spans 470 to 529 (VPGRKFIAVKAHSPQGEGEIPLHRGEAVKVLSIGEGGFWEGTVKGRTGWFPADCVEEVQM). Ser482 bears the Phosphoserine mark. Tyr555 is modified (phosphotyrosine). Positions 570-664 (VAILQKRDHE…RLVMKVVSVT (95 aa)) constitute a PDZ domain. A disordered region spans residues 664 to 687 (TRKPEEDSARRRAPPPPKRAPSTT). The interval 677–684 (PPPPKRAP) is required for interaction with ABI1. A phosphoserine mark is found at Ser694, Ser781, Ser790, and Ser801. 5 disordered regions span residues 759-855 (RQGL…RSSF), 868-1053 (AGLY…QPSR), 1115-1199 (AARE…MILS), 1211-1463 (LIVV…GPAR), and 1476-1518 (GDPV…EPVG). Positions 812–845 (IPPPPQTAPPPPPAPYYFDSGPPPTFSPPPPPPG) are enriched in pro residues. A phosphoserine mark is found at Ser891 and Ser898. Position 913 is a phosphothreonine (Thr913). Tyr931 carries the post-translational modification Phosphotyrosine. The residue at position 966 (Arg966) is an Asymmetric dimethylarginine. A compositionally biased stretch (basic and acidic residues) spans 1017-1027 (VKERRLEERRR). Over residues 1123–1132 (SQTPSRSPTP) the composition is skewed to polar residues. Position 1131 is a phosphothreonine (Thr1131). Residues Ser1135, Ser1160, Ser1164, and Ser1167 each carry the phosphoserine modification. The span at 1175 to 1195 (ARREAEKPTREERKSPEDKKS) shows a compositional bias: basic and acidic residues. Thr1235 carries the post-translational modification Phosphothreonine. Pro residues-rich tracts occupy residues 1252 to 1262 (MPSPRAQPPGS) and 1322 to 1334 (TPPP…PTTV). Ser1254 carries the phosphoserine modification. The span at 1335–1344 (PSPASGKPSS) shows a compositional bias: low complexity. Positions 1361–1371 (ADTRSSSDPHL) are enriched in basic and acidic residues. Over residues 1372–1393 (ETTSTISTVSSMSTLSSESGEL) the composition is skewed to low complexity. Residues 1411 to 1417 (PPVPPKP) carry the SH3-binding motif. Phosphoserine is present on Ser1421. Positions 1495-1515 (ISELSSRLQQLNKDTRSLGEE) form a coiled coil. Positions 1496–1506 (SELSSRLQQLN) are enriched in polar residues. 4 positions are modified to phosphoserine: Ser1511, Ser1522, Ser1530, and Ser1549. Disordered stretches follow at residues 1556 to 1594 (ISAQ…PASL) and 1637 to 1673 (VRSV…QQKP). The segment covering 1637–1647 (VRSVSARSRSP) has biased composition (low complexity). Residues Ser1644, Ser1646, and Ser1648 each carry the phosphoserine modification. Residues 1648 to 1658 (SPSPLPSPSPG) are compositionally biased toward pro residues. Low complexity predominate over residues 1659–1668 (SGPSAGPRRP). The SAM domain maps to 1677–1740 (WSKFDVGDWL…ERALRQLDGS (64 aa)).

Belongs to the SHANK family. In terms of assembly, may homomultimerize via its SAM domain. Interacts with BAIAP2, DBNL and SLC17A7/VGLUT1. Interacts with DLGAP1/GKAP, GRM1/MGLUR1, GRM5/MGLUR5 and LZTS3 C-termini via its PDZ domain. Interacts with ABI1, HOMER1, HOMER2, HOMER3 and CTTN/cortactin SH3 domain. Is part of a complex with DLG4/PSD-95 and DLGAP1/GKAP. Interacts (via PDZ domain) with the GRIA1 subunit of the AMPA receptor (via PDZ-binding motif). Interacts with WASF1 and CYFIP2; the interactions mediate the association of SHANK3 with the WAVE1 complex. Interacts with ARPC2; the interaction probably mediates the association of SHANK3 with the Arp2/3 complex. Interacts (via ANK repeats) with SHARPIN and SPTAN1. Interacts (via PDZ domain) with ARHGAP44 (probably via PDZ-binding motif); the interaction takes place in dendritic spines and promotes GRIA1 exocytosis. Interacts with CAMK2A. Interacts with DIP2A. Interacts with ADGRL3. As to expression, widely expressed in brain (at protein level).

It is found in the cytoplasm. Its subcellular location is the postsynaptic density. It localises to the cell projection. The protein localises to the dendritic spine. Major scaffold postsynaptic density protein which interacts with multiple proteins and complexes to orchestrate the dendritic spine and synapse formation, maturation and maintenance. Interconnects receptors of the postsynaptic membrane including NMDA-type and metabotropic glutamate receptors via complexes with GKAP/PSD-95 and HOMER, respectively, and the actin-based cytoskeleton. Plays a role in the structural and functional organization of the dendritic spine and synaptic junction through the interaction with Arp2/3 and WAVE1 complex as well as the promotion of the F-actin clusters. By way of this control of actin dynamics, participates in the regulation of developing neurons growth cone motility and the NMDA receptor-signaling. Also modulates GRIA1 exocytosis and GRM5/MGLUR5 expression and signaling to control the AMPA and metabotropic glutamate receptor-mediated synaptic transmission and plasticity. May be required at an early stage of synapse formation and be inhibited by IGF1 to promote synapse maturation. The polypeptide is SH3 and multiple ankyrin repeat domains protein 3 (Shank3) (Rattus norvegicus (Rat)).